The primary structure comprises 171 residues: Peptide deformylase (171 aa).

Residues Cys91 and His133 each contribute to the Fe cation site. Glu134 is an active-site residue. A Fe cation-binding site is contributed by His137.

Belongs to the polypeptide deformylase family. It depends on Fe(2+) as a cofactor.

It carries out the reaction N-terminal N-formyl-L-methionyl-[peptide] + H2O = N-terminal L-methionyl-[peptide] + formate. Removes the formyl group from the N-terminal Met of newly synthesized proteins. Requires at least a dipeptide for an efficient rate of reaction. N-terminal L-methionine is a prerequisite for activity but the enzyme has broad specificity at other positions. The chain is Peptide deformylase from Hamiltonella defensa subsp. Acyrthosiphon pisum (strain 5AT).